We begin with the raw amino-acid sequence, 293 residues long: ELMO domain-containing protein 2 (293 aa).

The 157-residue stretch at Q126 to L282 folds into the ELMO domain.

Functionally, acts as a GTPase-activating protein (GAP) toward guanine nucleotide exchange factors like ARL2, ARL3, ARF1 and ARF6, but not for GTPases outside the Arf family. The polypeptide is ELMO domain-containing protein 2 (Elmod2) (Mus musculus (Mouse)).